Here is a 574-residue protein sequence, read N- to C-terminus: Streptolysin O (574 aa).

A signal peptide spans 1–36 (MKDMSNKKIFKKYSRVAGLLTAALIVGNLVTANADS). Positions 37 to 52 (NKQNTANTETTTTNEQ) are enriched in low complexity. 2 disordered regions span residues 37-64 (NKQNTANTETTTTNEQPKPESSELTTEK) and 84-111 (KEMPLESAEKEEKKSEDNKKSEEDHTEE). The segment covering 53 to 64 (PKPESSELTTEK) has biased composition (basic and acidic residues). The next 4 beta stranded transmembrane spans lie at 263-276 (KSQIEAALNVNSKI), 283-292 (IDFKSISKGE), 361-370 (SNDVEAAFSA), and 378-390 (KTNGKYSDILENS). Positions 532 to 542 (ECTGLAWEWWR) match the Conserved undecapeptide motif. Positions 564 to 565 (TL) match the Cholesterol binding motif.

This sequence belongs to the cholesterol-dependent cytolysin family. In terms of assembly, homooligomeric pore complex of 35 to 50 subunits; when inserted in the host membrane.

It localises to the secreted. The protein resides in the host cell membrane. A cholesterol-dependent toxin that causes cytolysis by forming pores in cholesterol containing host membranes. After binding to target membranes, the protein undergoes a major conformation change, leading to its insertion in the host membrane and formation of an oligomeric pore complex. Cholesterol is required for binding to host membranes, membrane insertion and pore formation; cholesterol binding is mediated by a Thr-Leu pair in the C-terminus. Can be reversibly inactivated by oxidation. This Streptococcus dysgalactiae subsp. equisimilis (Streptococcus equisimilis) protein is Streptolysin O (slo).